The following is a 24-amino-acid chain: Fibrinogen gamma chain (24 aa).

Heterohexamer; disulfide linked. Contains 2 sets of 3 non-identical chains (alpha, beta and gamma). The 2 heterotrimers are in head to head conformation with the N-termini in a small central domain. In terms of processing, conversion of fibrinogen to fibrin is triggered by thrombin, which cleaves fibrinopeptides A and B from alpha and beta chains, and thus exposes the N-terminal polymerization sites responsible for the formation of the soft clot. The soft clot is converted into the hard clot by factor XIIIA which catalyzes the epsilon-(gamma-glutamyl)lysine cross-linking between gamma chains (stronger) and between alpha chains (weaker) of different monomers.

The protein resides in the secreted. Functionally, together with fibrinogen alpha (FGA) and fibrinogen beta (FGB), polymerizes to form an insoluble fibrin matrix. Has a major function in hemostasis as one of the primary components of blood clots. In addition, functions during the early stages of wound repair to stabilize the lesion and guide cell migration during re-epithelialization. Was originally thought to be essential for platelet aggregation, based on in vitro studies using anticoagulated blood. However, subsequent studies have shown that it is not absolutely required for thrombus formation in vivo. Enhances expression of SELP in activated platelets via an ITGB3-dependent pathway. Maternal fibrinogen is essential for successful pregnancy. Fibrin deposition is also associated with infection, where it protects against IFNG-mediated hemorrhage. May also facilitate the antibacterial immune response via both innate and T-cell mediated pathways. The chain is Fibrinogen gamma chain (FGG) from Canis lupus familiaris (Dog).